Consider the following 316-residue polypeptide: MTSAPLAARLTVPSGPLFFPVTAYGPDGGLDLDVYRTHVRRGVEAGAAAVFACCGTGEFHALTPEEFAACVRAAVEESAGRVPVLAGAGYGTALAVRYARLAEQAGADGLLAMPPYLVLAGQEGLVRHYREVAAATPLPVIVYQRDNAVFTPESVVELARTDGVVGLKDGLGDLDLMQRIVSAVRTELPGEEFLYFNGLPTAEQTQLSYRALGVPLYSSAVFCFAPEIAVAFHRALREGDDATVHRLLDGFYRPFVELRARGRGYAVALVKAGVRLRGLDVGEVRTPLQEPAEEHVKQLVQIIERGQVLVEEGAGR.

This sequence belongs to the DapA family.

The enzyme catalyses 5-dehydro-4-deoxy-D-glucarate + H(+) = 2,5-dioxopentanoate + CO2 + H2O. It participates in carbohydrate acid metabolism; D-glucarate degradation; 2,5-dioxopentanoate from D-glucarate: step 2/2. This Streptomyces coelicolor (strain ATCC BAA-471 / A3(2) / M145) protein is Probable 5-dehydro-4-deoxyglucarate dehydratase 1.